Here is a 615-residue protein sequence, read N- to C-terminus: 1-deoxy-D-xylulose-5-phosphate synthase (615 aa).

Thiamine diphosphate is bound by residues histidine 72 and 111 to 113 (GHS). Aspartate 142 contacts Mg(2+). Residues 143–144 (GA), asparagine 171, tyrosine 278, and glutamate 360 each bind thiamine diphosphate. Residue asparagine 171 participates in Mg(2+) binding.

Belongs to the transketolase family. DXPS subfamily. As to quaternary structure, homodimer. The cofactor is Mg(2+). Thiamine diphosphate serves as cofactor.

The enzyme catalyses D-glyceraldehyde 3-phosphate + pyruvate + H(+) = 1-deoxy-D-xylulose 5-phosphate + CO2. It participates in metabolic intermediate biosynthesis; 1-deoxy-D-xylulose 5-phosphate biosynthesis; 1-deoxy-D-xylulose 5-phosphate from D-glyceraldehyde 3-phosphate and pyruvate: step 1/1. In terms of biological role, catalyzes the acyloin condensation reaction between C atoms 2 and 3 of pyruvate and glyceraldehyde 3-phosphate to yield 1-deoxy-D-xylulose-5-phosphate (DXP). The sequence is that of 1-deoxy-D-xylulose-5-phosphate synthase from Campylobacter jejuni subsp. jejuni serotype O:6 (strain 81116 / NCTC 11828).